Reading from the N-terminus, the 511-residue chain is Serine/threonine-protein kinase Nek3 (511 aa).

M1 is subject to N-acetylmethionine. The interval 1 to 282 is interaction with VAV2; the sequence is MDNYTVLRVI…EQILDEIKIS (282 aa). The Protein kinase domain maps to 4–255; that stretch reads YTVLRVIGQG…ATTLLCRGSL (252 aa). ATP is bound by residues 10–18 and K33; that span reads IGQGSFGRA. Catalysis depends on D125, which acts as the Proton acceptor. At T159 the chain carries Phosphothreonine; by autocatalysis. Disordered regions lie at residues 299-370 and 443-511; these read LGEA…GPSS and GPLS…GERA. The span at 309 to 321 shows a compositional bias: basic and acidic residues; it reads EEERGRKCSHTEL. The span at 472-485 shows a compositional bias: acidic residues; sequence LDEEDTDFEEDNEN. The residue at position 477 (T477) is a Phosphothreonine. Over residues 498 to 511 the composition is skewed to gly residues; the sequence is YGDGPGGQLLGERA.

This sequence belongs to the protein kinase superfamily. NEK Ser/Thr protein kinase family. NIMA subfamily. As to quaternary structure, interacts with PXN, PRLR, VAV1 and VAV2 and this interaction is prolactin-dependent. Requires Mg(2+) as cofactor. Phosphorylation at Thr-477 regulates its catalytic activity. Brain.

The protein resides in the cytoplasm. The protein localises to the cell projection. It is found in the axon. The catalysed reaction is L-seryl-[protein] + ATP = O-phospho-L-seryl-[protein] + ADP + H(+). The enzyme catalyses L-threonyl-[protein] + ATP = O-phospho-L-threonyl-[protein] + ADP + H(+). In terms of biological role, protein kinase which influences neuronal morphogenesis and polarity through effects on microtubules. Regulates microtubule acetylation in neurons. Contributes to prolactin-mediated phosphorylation of PXN and VAV2. This chain is Serine/threonine-protein kinase Nek3 (Nek3), found in Mus musculus (Mouse).